The primary structure comprises 67 residues: UPF0337 protein CC_0938 (67 aa).

Residues 37-67 form a disordered region; the sequence is AAQKAKGDLQNKVGKAQDKARRRDQALNARL. Basic and acidic residues predominate over residues 41–61; it reads AKGDLQNKVGKAQDKARRRDQ.

It belongs to the UPF0337 (CsbD) family.

This is UPF0337 protein CC_0938 from Caulobacter vibrioides (strain ATCC 19089 / CIP 103742 / CB 15) (Caulobacter crescentus).